Reading from the N-terminus, the 691-residue chain is DNA ligase (691 aa).

NAD(+) contacts are provided by residues aspartate 41–aspartate 45, serine 90–leucine 91, and glutamate 130. Lysine 132 (N6-AMP-lysine intermediate) is an active-site residue. Residues arginine 153, glutamate 190, lysine 307, and lysine 331 each coordinate NAD(+). Zn(2+) is bound by residues cysteine 425, cysteine 428, cysteine 443, and cysteine 449. Residues alanine 610–proline 691 enclose the BRCT domain.

The protein belongs to the NAD-dependent DNA ligase family. LigA subfamily. Requires Mg(2+) as cofactor. It depends on Mn(2+) as a cofactor.

It catalyses the reaction NAD(+) + (deoxyribonucleotide)n-3'-hydroxyl + 5'-phospho-(deoxyribonucleotide)m = (deoxyribonucleotide)n+m + AMP + beta-nicotinamide D-nucleotide.. DNA ligase that catalyzes the formation of phosphodiester linkages between 5'-phosphoryl and 3'-hydroxyl groups in double-stranded DNA using NAD as a coenzyme and as the energy source for the reaction. It is essential for DNA replication and repair of damaged DNA. This Burkholderia ambifaria (strain ATCC BAA-244 / DSM 16087 / CCUG 44356 / LMG 19182 / AMMD) (Burkholderia cepacia (strain AMMD)) protein is DNA ligase.